Consider the following 471-residue polypeptide: ATP synthase subunit beta, chloroplastic (471 aa).

ATP is bound at residue 151–158 (GGAGVGKT).

The protein belongs to the ATPase alpha/beta chains family. As to quaternary structure, F-type ATPases have 2 components, CF(1) - the catalytic core - and CF(0) - the membrane proton channel. CF(1) has five subunits: alpha(3), beta(3), gamma(1), delta(1), epsilon(1). CF(0) has four main subunits: a(1), b(1), b'(1) and c(9-12).

Its subcellular location is the plastid. It localises to the chloroplast thylakoid membrane. It carries out the reaction ATP + H2O + 4 H(+)(in) = ADP + phosphate + 5 H(+)(out). Its function is as follows. Produces ATP from ADP in the presence of a proton gradient across the membrane. The catalytic sites are hosted primarily by the beta subunits. The polypeptide is ATP synthase subunit beta, chloroplastic (Rhodomonas salina (Cryptomonas salina)).